Reading from the N-terminus, the 278-residue chain is 4-deoxy-L-threo-5-hexosulose-uronate ketol-isomerase (278 aa).

Residues histidine 196, histidine 198, glutamate 203, and histidine 245 each contribute to the Zn(2+) site.

This sequence belongs to the KduI family. Requires Zn(2+) as cofactor.

It carries out the reaction 5-dehydro-4-deoxy-D-glucuronate = 3-deoxy-D-glycero-2,5-hexodiulosonate. Its pathway is glycan metabolism; pectin degradation; 2-dehydro-3-deoxy-D-gluconate from pectin: step 4/5. Catalyzes the isomerization of 5-dehydro-4-deoxy-D-glucuronate to 3-deoxy-D-glycero-2,5-hexodiulosonate. The sequence is that of 4-deoxy-L-threo-5-hexosulose-uronate ketol-isomerase from Salmonella paratyphi A (strain ATCC 9150 / SARB42).